Here is a 234-residue protein sequence, read N- to C-terminus: Large ribosomal subunit protein uL1 (234 aa).

Belongs to the universal ribosomal protein uL1 family. In terms of assembly, part of the 50S ribosomal subunit.

Its function is as follows. Binds directly to 23S rRNA. The L1 stalk is quite mobile in the ribosome, and is involved in E site tRNA release. Protein L1 is also a translational repressor protein, it controls the translation of the L11 operon by binding to its mRNA. This is Large ribosomal subunit protein uL1 from Serratia marcescens.